The chain runs to 228 residues: Lipoprotein-releasing system ATP-binding protein LolD (228 aa).

The region spanning 6-228 (LRCKELSKSY…KNGILHKEQG (223 aa)) is the ABC transporter domain. An ATP-binding site is contributed by 42–49 (GASGSGKS).

The protein belongs to the ABC transporter superfamily. Lipoprotein translocase (TC 3.A.1.125) family. In terms of assembly, the complex is composed of two ATP-binding proteins (LolD) and two transmembrane proteins (LolC and LolE).

The protein localises to the cell inner membrane. In terms of biological role, part of the ABC transporter complex LolCDE involved in the translocation of mature outer membrane-directed lipoproteins, from the inner membrane to the periplasmic chaperone, LolA. Responsible for the formation of the LolA-lipoprotein complex in an ATP-dependent manner. The chain is Lipoprotein-releasing system ATP-binding protein LolD from Idiomarina loihiensis (strain ATCC BAA-735 / DSM 15497 / L2-TR).